Reading from the N-terminus, the 347-residue chain is Dihydroorotase (347 aa).

Residues histidine 17 and histidine 19 each coordinate Zn(2+). Substrate contacts are provided by residues 19–21 (HLR) and asparagine 45. Lysine 103, histidine 140, and histidine 178 together coordinate Zn(2+). An N6-carboxylysine modification is found at lysine 103. Position 140 (histidine 140) interacts with substrate. Leucine 223 serves as a coordination point for substrate. Aspartate 251 is a binding site for Zn(2+). Aspartate 251 is an active-site residue. Residues histidine 255 and alanine 267 each contribute to the substrate site.

This sequence belongs to the metallo-dependent hydrolases superfamily. DHOase family. Class II DHOase subfamily. As to quaternary structure, homodimer. Requires Zn(2+) as cofactor.

The catalysed reaction is (S)-dihydroorotate + H2O = N-carbamoyl-L-aspartate + H(+). It functions in the pathway pyrimidine metabolism; UMP biosynthesis via de novo pathway; (S)-dihydroorotate from bicarbonate: step 3/3. Functionally, catalyzes the reversible cyclization of carbamoyl aspartate to dihydroorotate. This is Dihydroorotase from Pectobacterium atrosepticum (strain SCRI 1043 / ATCC BAA-672) (Erwinia carotovora subsp. atroseptica).